Here is a 232-residue protein sequence, read N- to C-terminus: Ubiquinone biosynthesis O-methyltransferase (232 aa).

Residues Arg-36, Gly-55, Asp-76, and Leu-120 each contribute to the S-adenosyl-L-methionine site.

The protein belongs to the methyltransferase superfamily. UbiG/COQ3 family.

The catalysed reaction is a 3-demethylubiquinol + S-adenosyl-L-methionine = a ubiquinol + S-adenosyl-L-homocysteine + H(+). The enzyme catalyses a 3-(all-trans-polyprenyl)benzene-1,2-diol + S-adenosyl-L-methionine = a 2-methoxy-6-(all-trans-polyprenyl)phenol + S-adenosyl-L-homocysteine + H(+). It functions in the pathway cofactor biosynthesis; ubiquinone biosynthesis. O-methyltransferase that catalyzes the 2 O-methylation steps in the ubiquinone biosynthetic pathway. In Stutzerimonas stutzeri (strain A1501) (Pseudomonas stutzeri), this protein is Ubiquinone biosynthesis O-methyltransferase.